Reading from the N-terminus, the 420-residue chain is Zinc finger and BTB domain-containing protein 42 (420 aa).

The BTB domain maps to 24 to 92; sequence CDCTVLVGDA…MYEGRLDLHN (69 aa). 2 disordered regions span residues 127-204 and 222-247; these read TRTL…HPPC and VKAE…PPPV. A compositionally biased stretch (low complexity) spans 227 to 241; the sequence is DSFSEQDSSSPQSAD. C2H2-type zinc fingers lie at residues 292–314, 332–354, 360–382, and 388–411; these read CICP…LSAH, PTCP…ERTH, YTCV…AVVH, and HACR…RKFH.

It belongs to the krueppel C2H2-type zinc-finger protein family. ZBTB18 subfamily. Highly expressed in skeletal muscle and ovary (at protein level). Low expression in brain, lung, spleen, liver and heart (at protein level). Not detected in kidney and intestines (at protein level). Also observed in testis and, at lower levels, in stomach and nervous system.

The protein resides in the cytoplasm. The protein localises to the nucleus. It is found in the nucleoplasm. Its function is as follows. Transcriptional repressor. Specifically binds DNA and probably acts by recruiting chromatin remodeling multiprotein complexes. This is Zinc finger and BTB domain-containing protein 42 (Zbtb42) from Mus musculus (Mouse).